Reading from the N-terminus, the 582-residue chain is Zinc finger protein 614 (582 aa).

The KRAB domain occupies 8-79; that stretch reads LTLEDVAVEF…VAKIQNKNCP (72 aa). Residues 202-224 form a C2H2-type 1 zinc finger; it reads HACIECEQTFLRKSQLIYHENIH. A C2H2-type 2; degenerate zinc finger spans residues 254 to 278; the sequence is KICIPNEYRKGSTVNSRLIAHQQTH. C2H2-type zinc fingers lie at residues 284 to 306, 312 to 334, 340 to 362, 368 to 390, 396 to 418, 424 to 446, 452 to 474, 480 to 502, 508 to 530, and 536 to 558; these read YMCSECGKGFTMKRYLIAHQRTH, YVCNECGKGFTVKSNLIVHQRTH, YICSECGKGFTMKRYLVVHQRTH, YICSECGKGFTVKSNLIVHQRSH, YICSECGKGFTVKRTLIIHQRTH, YICNECGKGFTTKRTLIIHQRTH, YECNECGKAFSQKICLIQHERCH, FVCTECGKSYSHKYGLITHQRIH, YECNECGKAFTTKSVLNVHQRTH, and YGCSDCEKAFSHLSNLVKHKKMH.

It belongs to the krueppel C2H2-type zinc-finger protein family.

The protein resides in the nucleus. Functionally, may be involved in transcriptional regulation. In Macaca fascicularis (Crab-eating macaque), this protein is Zinc finger protein 614 (ZNF614).